A 145-amino-acid chain; its full sequence is Toxin Res (145 aa).

It belongs to the MbcT/ParT/Res family. In terms of assembly, homodimer. Forms a complex with cognate antitoxin Xre; the 2 toxin molecules dimerize and each contacts an Xre homodimer. Most Res-Xre contacts are between the antitoxin molecule closest to the toxin.

In terms of biological role, toxic component of a type II toxin-antitoxin (TA) system. Expression in E.coli inhibits cell growth. In vivo it is probably neutralized by cognate antitoxin Xre; this has not been shown upon expression in E.coli. Probably depletes intracellular NAD(+). This chain is Toxin Res, found in Pseudomonas putida (strain ATCC 47054 / DSM 6125 / CFBP 8728 / NCIMB 11950 / KT2440).